A 102-amino-acid polypeptide reads, in one-letter code: NADH-quinone oxidoreductase subunit K (102 aa).

3 helical membrane-spanning segments follow: residues 5-25 (LSHYLTVSAILFTIGVFGIFL), 31-51 (IVILMSIELILLAVNINMVAF), and 65-85 (LFILTVAAAEAAIGLAILVVF).

This sequence belongs to the complex I subunit 4L family. NDH-1 is composed of 14 different subunits. Subunits NuoA, H, J, K, L, M, N constitute the membrane sector of the complex.

The protein resides in the cell inner membrane. It catalyses the reaction a quinone + NADH + 5 H(+)(in) = a quinol + NAD(+) + 4 H(+)(out). Functionally, NDH-1 shuttles electrons from NADH, via FMN and iron-sulfur (Fe-S) centers, to quinones in the respiratory chain. The immediate electron acceptor for the enzyme in this species is believed to be ubiquinone. Couples the redox reaction to proton translocation (for every two electrons transferred, four hydrogen ions are translocated across the cytoplasmic membrane), and thus conserves the redox energy in a proton gradient. This Agrobacterium fabrum (strain C58 / ATCC 33970) (Agrobacterium tumefaciens (strain C58)) protein is NADH-quinone oxidoreductase subunit K.